Consider the following 402-residue polypeptide: UPF0261 protein y4oU (402 aa).

It belongs to the UPF0261 family.

The polypeptide is UPF0261 protein y4oU (Sinorhizobium fredii (strain NBRC 101917 / NGR234)).